The sequence spans 558 residues: Xylulose kinase 2 (558 aa).

Substrate contacts are provided by residues Asp16, 20–23, Ser111, and Asp283; that span reads QSMK. ATP is bound by residues Thr305 and 456-460; that span reads GASAN.

This sequence belongs to the FGGY kinase family. It depends on a divalent metal cation as a cofactor.

Its subcellular location is the cytoplasm. The enzyme catalyses D-xylulose + ATP = D-xylulose 5-phosphate + ADP + H(+). Its pathway is isoprenoid biosynthesis; carotenoid biosynthesis. Its activity is regulated as follows. Repressed by oxo-clomazone (keto-clomazone), a bleaching herbicide. In terms of biological role, mediates 1-deoxy-D-xylulose (DX) phosphorylation in the cytoplasm prior to the translocation of 1-deoxy-D-xylulose 5-phosphate into plastids. Can also phosphorylate D-xylulose (Xyl). Uses preferentially ATP as cosubstrate. The polypeptide is Xylulose kinase 2 (Arabidopsis thaliana (Mouse-ear cress)).